The following is a 141-amino-acid chain: Large ribosomal subunit protein uL11 (141 aa).

Belongs to the universal ribosomal protein uL11 family. Part of the ribosomal stalk of the 50S ribosomal subunit. Interacts with L10 and the large rRNA to form the base of the stalk. L10 forms an elongated spine to which L12 dimers bind in a sequential fashion forming a multimeric L10(L12)X complex. Post-translationally, one or more lysine residues are methylated.

In terms of biological role, forms part of the ribosomal stalk which helps the ribosome interact with GTP-bound translation factors. This is Large ribosomal subunit protein uL11 from Synechococcus elongatus (strain ATCC 33912 / PCC 7942 / FACHB-805) (Anacystis nidulans R2).